The sequence spans 430 residues: Enolase (430 aa).

Position 167 (glutamine 167) interacts with (2R)-2-phosphoglycerate. Residue glutamate 209 is the Proton donor of the active site. Residues aspartate 245, glutamate 286, and aspartate 313 each coordinate Mg(2+). Residues lysine 338, arginine 367, serine 368, and lysine 389 each coordinate (2R)-2-phosphoglycerate. Lysine 338 functions as the Proton acceptor in the catalytic mechanism.

It belongs to the enolase family. Requires Mg(2+) as cofactor.

Its subcellular location is the cytoplasm. The protein resides in the secreted. It is found in the cell surface. The catalysed reaction is (2R)-2-phosphoglycerate = phosphoenolpyruvate + H2O. The protein operates within carbohydrate degradation; glycolysis; pyruvate from D-glyceraldehyde 3-phosphate: step 4/5. Catalyzes the reversible conversion of 2-phosphoglycerate (2-PG) into phosphoenolpyruvate (PEP). It is essential for the degradation of carbohydrates via glycolysis. The protein is Enolase of Synechococcus sp. (strain WH7803).